We begin with the raw amino-acid sequence, 403 residues long: Succinoglycan biosynthesis protein ExoL (403 aa).

It localises to the cytoplasm. It participates in glycan metabolism; exopolysaccharide biosynthesis. In terms of biological role, essential for succinoglycan (EPS I) synthesis and nodule infection. Glycosyltransferase needed for the addition of the third sugar (glucose), catalyzes the formation of a beta-1,4 linkage between the second and third sugars. The chain is Succinoglycan biosynthesis protein ExoL (exoL) from Rhizobium meliloti (strain 1021) (Ensifer meliloti).